Consider the following 309-residue polypeptide: Taste receptor type 2 member 8 (309 aa).

The Extracellular portion of the chain corresponds to 1–7 (MFSPADN). Residues 8–28 (IFIILITGEFILGILGNGYIA) form a helical membrane-spanning segment. Residues 29–50 (LVNWIDWIKKKKISTVDYILTN) are Cytoplasmic-facing. Residues 51–71 (LVIARICLISVMVVNGIVIVL) form a helical membrane-spanning segment. The Extracellular portion of the chain corresponds to 72-82 (NPDVYTKNKQQ). A helical membrane pass occupies residues 83 to 103 (IVIFTFWTFANYLNMWITTCL). The Cytoplasmic portion of the chain corresponds to 104-131 (NVFYFLKIASSSHPLFLWLKWKIDMVVH). Residues 132–152 (WILLGCFAISLLVSLIAAIVL) traverse the membrane as a helical segment. Residues 153 to 184 (SCDYRFHAIAKHKRNITEMFHVSKIPYFEPLT) are Extracellular-facing. A glycan (N-linked (GlcNAc...) asparagine) is linked at Asn-167. Residues 185 to 205 (LFNLFAIVPFIVSLISFFLLV) form a helical membrane-spanning segment. Over 206 to 239 (RSLWRHTKQIKLYATGSRDPSTEVHVRAIKTMTS) the chain is Cytoplasmic. Residues 240–260 (FIFFFFLYYISSILMTFSYLM) form a helical membrane-spanning segment. At 261-266 (TKYKLA) the chain is on the extracellular side. Residues 267 to 287 (VEFGEIAAILYPLGHSLILIV) traverse the membrane as a helical segment. Topologically, residues 288-309 (LNNKLRQTFVRMLTCRKIACMI) are cytoplasmic.

Belongs to the G-protein coupled receptor T2R family. In terms of tissue distribution, expressed in subsets of taste receptor cells of the tongue and palate epithelium and exclusively in gustducin-positive cells.

It is found in the membrane. In terms of biological role, receptor that may play a role in the perception of bitterness and is gustducin-linked. May play a role in sensing the chemical composition of the gastrointestinal content. The activity of this receptor may stimulate alpha gustducin, mediate PLC-beta-2 activation and lead to the gating of TRPM5. The polypeptide is Taste receptor type 2 member 8 (TAS2R8) (Homo sapiens (Human)).